A 521-amino-acid chain; its full sequence is Zinc finger protein 394 (521 aa).

Residues 1 to 45 form a disordered region; that stretch reads MAAGSGVVPPPLGAGLCTVKVEEDSPGNQESSGSGDWQNPETSRK. Lys20 is covalently cross-linked (Glycyl lysine isopeptide (Lys-Gly) (interchain with G-Cter in SUMO2)). Over residues 26 to 41 the composition is skewed to polar residues; sequence PGNQESSGSGDWQNPE. Positions 38–133 constitute an SCAN box domain; that stretch reads QNPETSRKQF…RALDRASPQG (96 aa). Residues 135 to 196 form the KRAB domain; it reads MTFKDVAESL…KQEILKEAEP (62 aa). A Glycyl lysine isopeptide (Lys-Gly) (interchain with G-Cter in SUMO2) cross-link involves residue Lys259. 3 C2H2-type zinc fingers span residues 327–349, 355–377, and 383–405; these read YKCDSCEKGFRQRSDLFKHQRIH, YQCQECGKRFSQSAALVKHQRTH, and YACPECGECFRQSSHLSRHQRTH. The C2H2-type 4; atypical zinc-finger motif lies at 411–432; the sequence is YKCEECGEIVHVSSLFRHQRLH. Lys412 is covalently cross-linked (Glycyl lysine isopeptide (Lys-Gly) (interchain with G-Cter in SUMO2)). C2H2-type zinc fingers lie at residues 438 to 460, 466 to 488, and 494 to 516; these read YKCGDCEKSFRQRSDLFKHQRTH, YACVVCGRRFSQSATLIKHQRTH, and YKCFQCGERFRQSTHLVRHQRIH.

The protein belongs to the krueppel C2H2-type zinc-finger protein family. In terms of tissue distribution, expressed at high level in testis.

It is found in the nucleus. In terms of biological role, may be involved in transcriptional regulation. This chain is Zinc finger protein 394 (Znf394), found in Mus musculus (Mouse).